A 186-amino-acid chain; its full sequence is Elongation factor P (186 aa).

It belongs to the elongation factor P family.

Its subcellular location is the cytoplasm. It functions in the pathway protein biosynthesis; polypeptide chain elongation. Functionally, involved in peptide bond synthesis. Stimulates efficient translation and peptide-bond synthesis on native or reconstituted 70S ribosomes in vitro. Probably functions indirectly by altering the affinity of the ribosome for aminoacyl-tRNA, thus increasing their reactivity as acceptors for peptidyl transferase. The chain is Elongation factor P from Streptococcus mutans serotype c (strain ATCC 700610 / UA159).